The sequence spans 137 residues: Putative pre-16S rRNA nuclease (137 aa).

Belongs to the YqgF nuclease family.

It localises to the cytoplasm. Functionally, could be a nuclease involved in processing of the 5'-end of pre-16S rRNA. The chain is Putative pre-16S rRNA nuclease from Bacillus cytotoxicus (strain DSM 22905 / CIP 110041 / 391-98 / NVH 391-98).